The sequence spans 2485 residues: Tyrosine-protein phosphatase non-receptor type 13 (2485 aa).

The KIND domain occupies 3-190 (VSLAEALEVR…SGTDQLSCNS (188 aa)). A disordered region spans residues 186–220 (LSCNSEQKPDRSQAIRDRLRGKGLPTGRSSTSDVL). The segment covering 192 to 205 (QKPDRSQAIRDRLR) has biased composition (basic and acidic residues). A Phosphoserine modification is found at serine 240. The interval 260–283 (SDNSGREDSENTFSPYQFKTSGPE) is disordered. Residues 270 to 279 (NTFSPYQFKT) show a composition bias toward polar residues. Serine 301 and serine 302 each carry phosphoserine. The tract at residues 433–467 (RSEASKRFESSSGLPGVDETLSQGQSQRPSRQYET) is disordered. Residues 452 to 465 (TLSQGQSQRPSRQY) show a composition bias toward polar residues. Residues 469 to 504 (FEGNLINQEIMLKRQEEELMQLQAKMALRQSRLSLY) are a coiled coil. The 301-residue stretch at 572 to 872 (RKVNIMLLNG…YQHKFQLQMR (301 aa)) folds into the FERM domain. Serine 890, serine 897, serine 908, serine 911, and serine 914 each carry phosphoserine. 2 disordered regions span residues 947-975 (QNSSKEKNDKASWEEKPREMSKSYHDLSQ) and 995-1049 (TVAE…IEDP). Positions 950-971 (SKEKNDKASWEEKPREMSKSYH) are enriched in basic and acidic residues. Residues 1020–1032 (KLNNSKSVASLNR) are compositionally biased toward polar residues. 3 positions are modified to phosphoserine: serine 1029, serine 1033, and serine 1085. The span at 1033 to 1042 (SPERRKHESD) shows a compositional bias: basic and acidic residues. Residues 1093–1178 (LVNLKKDAKY…EDVTLVISQP (86 aa)) enclose the PDZ 1 domain. Disordered stretches follow at residues 1227 to 1258 (HISENSFGPSGGLREGSLSSQDSRTESASLSQ) and 1273 to 1362 (TWQE…SPPK). Polar residues-rich tracts occupy residues 1243–1258 (SLSSQDSRTESASLSQ), 1273–1288 (TWQESQHGSPSPSVIS), and 1327–1359 (TYSSSQDHQTPKQESSSSVNTSNKMNFKTFSSS). PDZ domains lie at 1368 to 1452 (EVEL…LEKG) and 1501 to 1588 (EVKL…LCRP). A compositionally biased stretch (polar residues) spans 1608–1630 (AQVLPNSSKDSSQPSCVEQSTSS). Disordered regions lie at residues 1608–1665 (AQVL…DLVT) and 1715–1751 (PNKPEFEDSNPSPLPPDMAPGQSYQPQSESASSSSMD). A compositionally biased stretch (low complexity) spans 1736–1749 (QSYQPQSESASSSS). 2 consecutive PDZ domains span residues 1788-1868 (LITL…IGRV) and 1882-1965 (PDIT…ATRN). The segment at 1971-1996 (PSSKRSAVSAPKSTKGNGSYSVGSCS) is disordered. Polar residues predominate over residues 1973–1996 (SKRSAVSAPKSTKGNGSYSVGSCS). Residues 2213-2467 (PSKELENLQE…IFCYQVILYV (255 aa)) form the Tyrosine-protein phosphatase domain. Residues aspartate 2378, 2408 to 2414 (CSAGIGR), and glutamine 2452 contribute to the substrate site. Cysteine 2408 (phosphocysteine intermediate) is an active-site residue. A substrate region spans residues 2408 to 2414 (CSAGIGR).

It belongs to the protein-tyrosine phosphatase family. Non-receptor class subfamily. As to quaternary structure, interacts (via the first PDZ domain) with PLEKHA1 and PLEKHA2. Interacts (via the second PDZ domain) with TNFRSF6 (Fas receptor) (via C-terminus). Interacts (via the second PDZ domain) with TRIP6 (via the third LIM domain and C-terminus). Interacts (via the third PDZ domain) with NGFR (via C-terminal SVP motif) and PKN2 (via C-terminus). Interacts (via the second or fourth PDZ domains) with PDLIM4 (via C-terminus only or via combined C-terminus and LIM domain, but not LIM domain only). Found in a complex with PDLIM4 and TRIP6. Interacts with PDLIM4; this interaction results in dephosphorylation of SRC 'Tyr-419' by this protein leading to its inactivation. Interacts with BRD7. Interacts with RAPGEF6. Interacts with ARHGAP29. Interacts with PIK3R2; dephosphorylates PIK3R2. Interacts with FBXL2. Interacts (via the FERM domain) with ENTR1. Found in a complex with ENTR1, PTPN13 and GIT1. Expressed in keratinocytes (at protein level). Present in most tissues with the exception of the liver and skeletal muscle. Most abundant in lung, kidney and fetal brain.

It is found in the cytoplasm. The protein resides in the cytoskeleton. It localises to the nucleus. Its subcellular location is the cell projection. The protein localises to the lamellipodium. The catalysed reaction is O-phospho-L-tyrosyl-[protein] + H2O = L-tyrosyl-[protein] + phosphate. Functionally, tyrosine phosphatase which negatively regulates FAS-induced apoptosis and NGFR-mediated pro-apoptotic signaling. May regulate phosphoinositide 3-kinase (PI3K) signaling through dephosphorylation of PIK3R2. This chain is Tyrosine-protein phosphatase non-receptor type 13 (PTPN13), found in Homo sapiens (Human).